Reading from the N-terminus, the 402-residue chain is Glutamate N-acetyltransferase (402 aa).

Substrate is bound by residues Thr-151, Lys-178, Thr-189, Glu-267, Asn-397, and Thr-402. The active-site Nucleophile is the Thr-189.

This sequence belongs to the ArgJ family. As to quaternary structure, heterotetramer of two alpha and two beta chains.

It is found in the cytoplasm. It catalyses the reaction N(2)-acetyl-L-ornithine + L-glutamate = N-acetyl-L-glutamate + L-ornithine. The protein operates within amino-acid biosynthesis; L-arginine biosynthesis; L-ornithine and N-acetyl-L-glutamate from L-glutamate and N(2)-acetyl-L-ornithine (cyclic): step 1/1. In terms of biological role, catalyzes the transfer of the acetyl group from N(2)-acetylornithine to glutamate, forming N-acetylglutamate and L-ornithine. This is Glutamate N-acetyltransferase from Methanothermobacter thermautotrophicus (strain ATCC 29096 / DSM 1053 / JCM 10044 / NBRC 100330 / Delta H) (Methanobacterium thermoautotrophicum).